Consider the following 202-residue polypeptide: dTTP/UTP pyrophosphatase (202 aa).

The active-site Proton acceptor is D74.

The protein belongs to the Maf family. YhdE subfamily. It depends on a divalent metal cation as a cofactor.

It localises to the cytoplasm. The catalysed reaction is dTTP + H2O = dTMP + diphosphate + H(+). It catalyses the reaction UTP + H2O = UMP + diphosphate + H(+). In terms of biological role, nucleoside triphosphate pyrophosphatase that hydrolyzes dTTP and UTP. May have a dual role in cell division arrest and in preventing the incorporation of modified nucleotides into cellular nucleic acids. In Methylococcus capsulatus (strain ATCC 33009 / NCIMB 11132 / Bath), this protein is dTTP/UTP pyrophosphatase.